A 363-amino-acid polypeptide reads, in one-letter code: Galactokinase (363 aa).

16–19 contributes to the substrate binding site; the sequence is EHTD. ATP contacts are provided by residues serine 50 and 103–109; that span reads GSGLSSS. The Mg(2+) site is built by serine 109 and glutamate 141. The active-site Proton acceptor is aspartate 153. Substrate is bound at residue tyrosine 205.

This sequence belongs to the GHMP kinase family. GalK subfamily.

It is found in the cytoplasm. It catalyses the reaction alpha-D-galactose + ATP = alpha-D-galactose 1-phosphate + ADP + H(+). It participates in carbohydrate metabolism; galactose metabolism. Its function is as follows. Catalyzes the transfer of the gamma-phosphate of ATP to D-galactose to form alpha-D-galactose-1-phosphate (Gal-1-P). This chain is Galactokinase, found in Mycobacterium tuberculosis (strain ATCC 25177 / H37Ra).